The chain runs to 526 residues: ATP synthase subunit alpha (526 aa).

Residue 178–185 (GDRQTGKT) participates in ATP binding.

Belongs to the ATPase alpha/beta chains family. F-type ATPases have 2 components, CF(1) - the catalytic core - and CF(0) - the membrane proton channel. CF(1) has five subunits: alpha(3), beta(3), gamma(1), delta(1), epsilon(1). CF(0) has four main subunits: a(1), b(1), b'(1) and c(9-12).

It localises to the cell membrane. It catalyses the reaction ATP + H2O + 4 H(+)(in) = ADP + phosphate + 5 H(+)(out). Produces ATP from ADP in the presence of a proton gradient across the membrane. The alpha chain is a regulatory subunit. This is ATP synthase subunit alpha from Roseiflexus castenholzii (strain DSM 13941 / HLO8).